We begin with the raw amino-acid sequence, 363 residues long: LIM and cysteine-rich domains protein 1 (363 aa).

The residue at position 16 (S16) is a Phosphoserine. A PET domain is found at 99 to 206 (MIMTNPIATG…GEVALPGQGG (108 aa)). A disordered region spans residues 200–234 (ALPGQGGLPKEEGKQQEKPEGAETAPPTTNGSIGD). Basic and acidic residues predominate over residues 208-220 (PKEEGKQQEKPEG). LIM zinc-binding domains follow at residues 239 to 304 (YVCE…SLRP) and 305 to 363 (RCSG…SKRS).

As to quaternary structure, interacts with beta-dystroglycan. Interacts with GATA1, GATA4 and GATA6.

The protein resides in the cytoplasm. The protein localises to the nucleus. In terms of biological role, transcriptional cofactor that restricts GATA6 function by inhibiting DNA-binding, resulting in repression of GATA6 transcriptional activation of downstream target genes. Represses GATA6-mediated trans activation of lung- and cardiac tissue-specific promoters. Inhibits DNA-binding by GATA4 and GATA1 to the cTNC promoter. Plays a critical role in the development of cardiac hypertrophy via activation of calcineurin/nuclear factor of activated T-cells signaling pathway. This is LIM and cysteine-rich domains protein 1 (LMCD1) from Bos taurus (Bovine).